The primary structure comprises 327 residues: Transaldolase (327 aa).

K132 acts as the Schiff-base intermediate with substrate in catalysis.

It belongs to the transaldolase family. Type 1 subfamily.

It localises to the cytoplasm. It carries out the reaction D-sedoheptulose 7-phosphate + D-glyceraldehyde 3-phosphate = D-erythrose 4-phosphate + beta-D-fructose 6-phosphate. The protein operates within carbohydrate degradation; pentose phosphate pathway; D-glyceraldehyde 3-phosphate and beta-D-fructose 6-phosphate from D-ribose 5-phosphate and D-xylulose 5-phosphate (non-oxidative stage): step 2/3. Functionally, transaldolase is important for the balance of metabolites in the pentose-phosphate pathway. The sequence is that of Transaldolase from Chlamydia trachomatis serovar D (strain ATCC VR-885 / DSM 19411 / UW-3/Cx).